Consider the following 802-residue polypeptide: Neuronal PAS domain-containing protein 4 (802 aa).

Residues 1 to 13 (MYRSTKGASKARR) are basic motif; degenerate. One can recognise a bHLH domain in the interval 1–53 (MYRSTKGASKARRDQINAEIRNLKELLPLAEADKVRLSYLHIMSLACIYTRKG). Residues 5 to 38 (TKGASKARRDQINAEIRNLKELLPLAEADKVRLS) are a coiled coil. Residues 14 to 53 (DQINAEIRNLKELLPLAEADKVRLSYLHIMSLACIYTRKG) form a helix-loop-helix motif region. PAS domains lie at 70-144 (SAQE…LDAD) and 203-275 (PGPG…LAEN). The PAC domain occupies 280–319 (AEMVVRLQAKHGGWTWIYCMLYSDGPEGPITANNYPISDT). 3 stretches are compositionally biased toward polar residues: residues 472 to 495 (PSSA…SSAR), 502 to 518 (TPCT…STAT), and 527 to 555 (THEQ…QLSP). The segment at 472–555 (PSSATFPDPL…SQTFPEQLSP (84 aa)) is disordered. Positions 624-648 (YTEKEQNEIDRLIQQISQLAQGMDR) form a coiled coil.

Efficient DNA binding requires dimerization with another bHLH protein. Heterodimer; forms a heterodimer with ARNT, ARNT2 or BMAL1. In terms of processing, ubiquitinated, leading to degradation by the proteosome. In terms of tissue distribution, specifically expressed in neurons. Expressed in the lateral nucleus of the amygdala (at protein level).

The protein localises to the nucleus. Functionally, transcription factor expressed in neurons of the brain that regulates the excitatory-inhibitory balance within neural circuits and is required for contextual memory in the hippocampus. Plays a key role in the structural and functional plasticity of neurons. Acts as an early-response transcription factor in both excitatory and inhibitory neurons, where it induces distinct but overlapping sets of late-response genes in these two types of neurons, allowing the synapses that form on inhibitory and excitatory neurons to be modified by neuronal activity in a manner specific to their function within a circuit, thereby facilitating appropriate circuit responses to sensory experience. In excitatory neurons, activates transcription of BDNF, which in turn controls the number of GABA-releasing synapses that form on excitatory neurons, thereby promoting an increased number of inhibitory synapses on excitatory neurons. In inhibitory neurons, regulates a distinct set of target genes that serve to increase excitatory input onto somatostatin neurons, probably resulting in enhanced feedback inhibition within cortical circuits. The excitatory and inhibitory balance in neurons affects a number of processes, such as short-term and long-term memory, acquisition of experience, fear memory, response to stress and social behavior. Acts as a regulator of dendritic spine development in olfactory bulb granule cells in a sensory-experience-dependent manner by regulating expression of MDM2. Efficient DNA binding requires dimerization with another bHLH protein, such as ARNT, ARNT2 or BMAL1. Can activate the CME (CNS midline enhancer) element. This is Neuronal PAS domain-containing protein 4 from Rattus norvegicus (Rat).